The primary structure comprises 318 residues: Protein OPG137 (318 aa).

Residues Val-145–Ser-172 are a coiled coil.

Belongs to the orthopoxvirus OPG137 family. In terms of assembly, homomultimer. Interacts with OPG160. In terms of processing, phosphorylated by a OPG054-independent mechanism.

It is found in the host cytoplasm. Its function is as follows. Required for viral crescent formation early during virus morphogenesis. This Vaccinia virus (strain Western Reserve) (VACV) protein is Protein OPG137 (OPG137).